Reading from the N-terminus, the 310-residue chain is Melanocyte-stimulating hormone receptor (310 aa).

Topologically, residues 1–37 are extracellular; that stretch reads MPMQGAQRKLLGSLNSTPTATSNLGLAANRTGAPCLE. An N-linked (GlcNAc...) asparagine glycan is attached at Asn-29. A helical membrane pass occupies residues 38 to 63; sequence LPIPDGLFLSLGLVSLVENVLVVAAI. The Cytoplasmic portion of the chain corresponds to 64-72; it reads AKNRNLHSS. A helical transmembrane segment spans residues 73-93; the sequence is MYCFICCLALSDLLVSGSNML. The Extracellular segment spans residues 94-110; the sequence is EAGVLATRASVVQQLHN. A helical membrane pass occupies residues 111–132; the sequence is TIDVLTCSSMLCSLCFLGAIAV. Over 133 to 155 the chain is Cytoplasmic; that stretch reads DRYISIFYALRYHSIMTLPRAQR. A helical membrane pass occupies residues 156 to 175; sequence AVAAIWVASVLSSTLFITYY. Over 176-183 the chain is Extracellular; it reads DHAAVLLC. Residues 184 to 203 traverse the membrane as a helical segment; that stretch reads LVVFFLAMLVLMAVLYVHML. At 204–232 the chain is on the cytoplasmic side; it reads AWACQHAQGIIRLHKRQPPAHKGFGLRGA. Residues 233 to 258 traverse the membrane as a helical segment; that stretch reads ATLTILLGIFFLCWGPFFLRLTLVVF. Topologically, residues 259–271 are extracellular; the sequence is CPQHLTCNCIFKN. A helical membrane pass occupies residues 272–292; sequence FKVFLTLIICNTIIDPLIYAF. Topologically, residues 293-310 are cytoplasmic; sequence RSQELRRTLKEVLGRGRW.

This sequence belongs to the G-protein coupled receptor 1 family. In terms of assembly, interacts with MGRN1, but does not undergo MGRN1-mediated ubiquitination; this interaction competes with GNAS-binding and thus inhibits agonist-induced cAMP production. Interacts with OPN3; the interaction results in a decrease in MC1R-mediated cAMP signaling and ultimately a decrease in melanin production in melanocytes.

It localises to the cell membrane. Receptor for MSH (alpha, beta and gamma) and ACTH. The activity of this receptor is mediated by G proteins which activate adenylate cyclase. Mediates melanogenesis, the production of eumelanin (black/brown) and phaeomelanin (red/yellow), via regulation of cAMP signaling in melanocytes. This chain is Melanocyte-stimulating hormone receptor (MC1R), found in Leontopithecus chrysomelas (Golden-headed lion tamarin).